The following is a 143-amino-acid chain: 3-hydroxyacyl-[acyl-carrier-protein] dehydratase FabZ (143 aa).

H49 is an active-site residue.

The protein belongs to the thioester dehydratase family. FabZ subfamily.

It localises to the cytoplasm. The enzyme catalyses a (3R)-hydroxyacyl-[ACP] = a (2E)-enoyl-[ACP] + H2O. Involved in unsaturated fatty acids biosynthesis. Catalyzes the dehydration of short chain beta-hydroxyacyl-ACPs and long chain saturated and unsaturated beta-hydroxyacyl-ACPs. In Wolbachia pipientis subsp. Culex pipiens (strain wPip), this protein is 3-hydroxyacyl-[acyl-carrier-protein] dehydratase FabZ.